The primary structure comprises 740 residues: F-BAR and double SH3 domains protein 2 (740 aa).

An F-BAR domain is found at V8–N282. A disordered region spans residues P303–S323. The span at D307 to S323 shows a compositional bias: basic and acidic residues. The stretch at G356–Q397 forms a coiled coil. SH3 domains lie at N469–S530 and A567–A629. Residues A567–A629 are required and sufficient for location at clathrin-coated pits. Positions A629–P645 are enriched in polar residues. Residues A629–V740 form a disordered region. Residues S646–P657 show a composition bias toward pro residues. A phosphoserine mark is found at S675 and S681. The span at S675–T706 shows a compositional bias: polar residues.

As to quaternary structure, homodimer. Interacts (via SH3 domain 2) with ITSN1 (via SH3 domain 4). Recruited to clathrin-coated pits during a mid-to-late stage of assembly via interaction with ITSN1. Interacts (via SH3 domain 1) with WASL. Interacts with WAS. Interacts with CASK and MAGI1. CASK inhibits interaction with MAGI1. In terms of processing, phosphorylated. Phosphorylation on a Ser residue is important for recruitment to the cell membrane and for its role in promoting endocytosis. In terms of tissue distribution, detected in inner ear vestibula and in stereocilia in cochlear hair cell bundles (at protein level). Ubiquitous. Detected in testis, liver, brain cortex, cerebellum, kidney, organ of Corti, utricle, spiral ganglion, tongue and eye.

The protein resides in the cytoplasm. Its subcellular location is the cell junction. It localises to the membrane. It is found in the clathrin-coated pit. The protein localises to the cell membrane. The protein resides in the cell projection. Its subcellular location is the stereocilium. Functionally, adapter protein that plays a role in endocytosis via clathrin-coated pits. Contributes to the internalization of cell surface receptors, such as integrin ITGB1 and transferrin receptor. Promotes endocytosis of EGFR in cancer cells, and thereby contributes to the down-regulation of EGFR signaling. Recruited to clathrin-coated pits during a mid-to-late stage of assembly, where it is required for normal progress from U-shaped intermediate stage pits to terminal, omega-shaped pits. Binds to membranes enriched in phosphatidylinositol 3,4-bisphosphate or phosphatidylinositol 3,4,5-trisphosphate. When bound to membranes, promotes actin polymerization via its interaction with WAS and/or WASL which leads to the activation of the Arp2/3 complex. Does not promote actin polymerisation in the absence of membranes. The polypeptide is F-BAR and double SH3 domains protein 2 (Fchsd2) (Mus musculus (Mouse)).